The following is a 291-amino-acid chain: MANSQVAEKEKLDAQTNNQDSVATIVTTENNKKNTIPDSEKKIVYSTQNLDLWYGENHALQNINLDILENNVTAIIGPSGCGKSTYIKALNRMVELVPSVKTAGKILYRDQNIFDAKYSKEKLRTNVGMVFQQPNPFPKSIYDNITYGPKTHGIKNKKILDEIVEKSLRGAAIWDELKDRLHTNAYGLSGGQQQRVCIARCLAIEPDVILMDEPTSALDPISTLRVEELVQELKENYSIIMVTHNMQQAARVSDKTAFFLNGYVNEYDDTDKIFSNPADKQTEDYISGRFG.

Residues Y45 to I286 enclose the ABC transporter domain. G77–S84 serves as a coordination point for ATP.

Belongs to the ABC transporter superfamily. Phosphate importer (TC 3.A.1.7) family. In terms of assembly, the complex is composed of two ATP-binding proteins (PstB), two transmembrane proteins (PstC and PstA) and a solute-binding protein (PstS).

It is found in the cell membrane. The enzyme catalyses phosphate(out) + ATP + H2O = ADP + 2 phosphate(in) + H(+). Its function is as follows. Part of the ABC transporter complex PstSACB involved in phosphate import. Responsible for energy coupling to the transport system. The sequence is that of Phosphate import ATP-binding protein PstB from Staphylococcus epidermidis (strain ATCC 12228 / FDA PCI 1200).